The chain runs to 624 residues: 1-deoxy-D-xylulose-5-phosphate synthase (624 aa).

Residues His74 and 115-117 (GHS) contribute to the thiamine diphosphate site. Asp146 contacts Mg(2+). Thiamine diphosphate is bound by residues 147-148 (GA), Asn175, Tyr286, and Glu366. Asn175 lines the Mg(2+) pocket.

Belongs to the transketolase family. DXPS subfamily. As to quaternary structure, homodimer. Mg(2+) is required as a cofactor. It depends on thiamine diphosphate as a cofactor.

It catalyses the reaction D-glyceraldehyde 3-phosphate + pyruvate + H(+) = 1-deoxy-D-xylulose 5-phosphate + CO2. The protein operates within metabolic intermediate biosynthesis; 1-deoxy-D-xylulose 5-phosphate biosynthesis; 1-deoxy-D-xylulose 5-phosphate from D-glyceraldehyde 3-phosphate and pyruvate: step 1/1. In terms of biological role, catalyzes the acyloin condensation reaction between C atoms 2 and 3 of pyruvate and glyceraldehyde 3-phosphate to yield 1-deoxy-D-xylulose-5-phosphate (DXP). This chain is 1-deoxy-D-xylulose-5-phosphate synthase, found in Clostridium kluyveri (strain NBRC 12016).